The sequence spans 240 residues: Bidirectional sugar transporter SWEET7c (240 aa).

The Extracellular segment spans residues 1–12 (MVSPDLIRNVVG). The MtN3/slv 1 domain occupies 10–48 (VVGIVGNVISFGLFLSPVPIFWWIIKNKNVQNFKADPIL). The helical transmembrane segment at 13 to 33 (IVGNVISFGLFLSPVPIFWWI) threads the bilayer. Topologically, residues 34–46 (IKNKNVQNFKADP) are cytoplasmic. A helical transmembrane segment spans residues 47-67 (ILVVTINGISLVIEAVYLTIF). The Extracellular segment spans residues 68-78 (FLFSDKKNKKK). Residues 79–99 (MGVVLATEALFMAAVAVGVLL) traverse the membrane as a helical segment. Residues 100 to 108 (GAHTHQRRS) are Cytoplasmic-facing. A helical transmembrane segment spans residues 109 to 129 (LIVGILCVIFGTIMYSSPLTI). One can recognise a MtN3/slv 2 domain in the interval 110–191 (IVGILCVIFG…LILYAIYYRT (82 aa)). At 130 to 140 (MVVKTKSVEYM) the chain is on the extracellular side. A helical membrane pass occupies residues 141–161 (PLLLSVVSFLNGLCWTLYALI). Residues 162-164 (RFD) lie on the Cytoplasmic side of the membrane. The chain crosses the membrane as a helical span at residues 165–185 (IFITIPNGLGVLFAIMQLILY). The Extracellular portion of the chain corresponds to 186-240 (AIYYRTTPKKQDKNLELPTVAPIAKDTSIVAPVGNDDDVNGSTASHATINITIEP). Residues Asn225 and Asn235 are each glycosylated (N-linked (GlcNAc...) asparagine).

The protein belongs to the SWEET sugar transporter family. Forms homooligomers and/or heterooligomers.

It localises to the cell membrane. In terms of biological role, mediates both low-affinity uptake and efflux of sugar across the plasma membrane. The sequence is that of Bidirectional sugar transporter SWEET7c (SWEET7C) from Oryza sativa subsp. indica (Rice).